The following is a 259-amino-acid chain: Phosphatidylglycerol--prolipoprotein diacylglyceryl transferase (259 aa).

The next 4 membrane-spanning stretches (helical) occupy residues L12–A32, I46–V66, I83–V103, and V109–I129. A 1,2-diacyl-sn-glycero-3-phospho-(1'-sn-glycerol) is bound at residue R131. The next 3 helical transmembrane spans lie at V167–W187, L194–I214, and G226–F246.

Belongs to the Lgt family.

The protein resides in the cell membrane. The enzyme catalyses L-cysteinyl-[prolipoprotein] + a 1,2-diacyl-sn-glycero-3-phospho-(1'-sn-glycerol) = an S-1,2-diacyl-sn-glyceryl-L-cysteinyl-[prolipoprotein] + sn-glycerol 1-phosphate + H(+). The protein operates within protein modification; lipoprotein biosynthesis (diacylglyceryl transfer). Functionally, catalyzes the transfer of the diacylglyceryl group from phosphatidylglycerol to the sulfhydryl group of the N-terminal cysteine of a prolipoprotein, the first step in the formation of mature lipoproteins. The chain is Phosphatidylglycerol--prolipoprotein diacylglyceryl transferase from Streptococcus equi subsp. zooepidemicus (strain H70).